The chain runs to 309 residues: Glutaminase (309 aa).

Substrate is bound by residues Ser-64, Asn-114, Glu-160, Asn-167, Tyr-191, Tyr-243, and Val-261.

Belongs to the glutaminase family. Homotetramer.

It catalyses the reaction L-glutamine + H2O = L-glutamate + NH4(+). This is Glutaminase from Methylorubrum extorquens (strain PA1) (Methylobacterium extorquens).